The sequence spans 305 residues: UDP-3-O-acyl-N-acetylglucosamine deacetylase (305 aa).

Zn(2+)-binding residues include histidine 79, histidine 238, and aspartate 242. Histidine 265 serves as the catalytic Proton donor.

Belongs to the LpxC family. Zn(2+) is required as a cofactor.

The catalysed reaction is a UDP-3-O-[(3R)-3-hydroxyacyl]-N-acetyl-alpha-D-glucosamine + H2O = a UDP-3-O-[(3R)-3-hydroxyacyl]-alpha-D-glucosamine + acetate. It participates in glycolipid biosynthesis; lipid IV(A) biosynthesis; lipid IV(A) from (3R)-3-hydroxytetradecanoyl-[acyl-carrier-protein] and UDP-N-acetyl-alpha-D-glucosamine: step 2/6. Its function is as follows. Catalyzes the hydrolysis of UDP-3-O-myristoyl-N-acetylglucosamine to form UDP-3-O-myristoylglucosamine and acetate, the committed step in lipid A biosynthesis. In Klebsiella pneumoniae subsp. pneumoniae (strain ATCC 700721 / MGH 78578), this protein is UDP-3-O-acyl-N-acetylglucosamine deacetylase.